Consider the following 86-residue polypeptide: Evasin-3 (86 aa).

A signal peptide spans methionine 1–glycine 20. Cystine bridges form between cysteine 42/cysteine 57, cysteine 46/cysteine 59, and cysteine 53/cysteine 70. An N-linked (GlcNAc...) asparagine glycan is attached at asparagine 45. Asparagine 76 carries N-linked (GlcNAc...) asparagine glycosylation.

Monomer.

The protein localises to the secreted. In terms of biological role, salivary chemokine-binding protein which shows chemokine neutralizing activity and binds to host chemokines CXCL1, CXCL2, CXCL3, CXCL5, CXCL6 and CXCL8. Binds to CXCL8 with 1:1 stoichiometry. Disrupts CXCL8 homodimer formation, disrupts the glycosaminoglycan-binding site of CXCL8 and inhibits the interaction of CXCL8 with CXCR2. This Rhipicephalus sanguineus (Brown dog tick) protein is Evasin-3.